The following is a 134-amino-acid chain: Profilin-2 (134 aa).

Cys13 and Cys118 are oxidised to a cystine. The Involved in PIP2 interaction motif lies at 84-100; the sequence is AVIRGKKGSGGITIKKT. A Phosphothreonine modification is found at Thr114.

This sequence belongs to the profilin family. In terms of assembly, occurs in many kinds of cells as a complex with monomeric actin in a 1:1 ratio. Phosphorylated by MAP kinases.

Its subcellular location is the cytoplasm. The protein localises to the cytoskeleton. Its function is as follows. Binds to actin and affects the structure of the cytoskeleton. At high concentrations, profilin prevents the polymerization of actin, whereas it enhances it at low concentrations. In Olea europaea (Common olive), this protein is Profilin-2.